Reading from the N-terminus, the 441-residue chain is Alpha-methylserine aldolase (441 aa).

Lysine 256 is modified (N6-(pyridoxal phosphate)lysine).

Belongs to the SHMT family. Alpha-methylserine aldolase subfamily. Homodimer. It depends on pyridoxal 5'-phosphate as a cofactor.

It catalyses the reaction 2-methyl-L-serine = formaldehyde + L-alanine. Catalyzes the reversible interconversion of alpha-methyl-L-serine to L-alanine and formaldehyde. This chain is Alpha-methylserine aldolase, found in Variovorax paradoxus.